A 168-amino-acid chain; its full sequence is Peptide deformylase 2 (168 aa).

Residues cysteine 91 and histidine 133 each coordinate Fe cation. Glutamate 134 is an active-site residue. Position 137 (histidine 137) interacts with Fe cation.

This sequence belongs to the polypeptide deformylase family. Fe(2+) is required as a cofactor.

The catalysed reaction is N-terminal N-formyl-L-methionyl-[peptide] + H2O = N-terminal L-methionyl-[peptide] + formate. In terms of biological role, removes the formyl group from the N-terminal Met of newly synthesized proteins. Requires at least a dipeptide for an efficient rate of reaction. N-terminal L-methionine is a prerequisite for activity but the enzyme has broad specificity at other positions. The sequence is that of Peptide deformylase 2 from Vibrio vulnificus (strain CMCP6).